The following is a 318-amino-acid chain: Thiohydrolase aneE (318 aa).

The protein belongs to the polyketide transferase af380 family.

It carries out the reaction aculene D + L-prolyl-[peptidyl-carrier protein] = aculene B + holo-[peptidyl-carrier protein]. The catalysed reaction is aculene C + L-prolyl-[peptidyl-carrier protein] = aculene A + holo-[peptidyl-carrier protein]. The protein operates within secondary metabolite biosynthesis. In terms of biological role, thiohydrolase; part of the gene cluster that mediates the biosynthesis of aculenes, a unique type of norsesquiterpenes that contain a nordaucane skeleton linked to an L-proline moiety and are of mixed biosynthetic origin. The pathway begins with the synthesis of dauca-4,7-diene by the terpene cyclase aneC using farnesyl pyrophosphate (FPP) as substrate. The cytochrome P450 monooxygenase aneF then performs the initial oxidation at C-12 of dauca-4,7-diene to yield asperaculane D. Asperaculane D is substrate of the cytochrome P450 monooxygenase aneD for C-10 hydroxylation to yield asperaculane E. The cytochrome P450 monooxygenase aneG then converts asperaculane E into aculene D via C-2 oxidation. The monomodular nonribosomal peptide synthtase aneB adenylates L-proline and the thiohydrolase aneE transfers this activated L-proline derivative to aculenes D and C to produce respectively aculenes B and A. The dioxygenase aneA converts aculene D into aculene C, and aculene B into aculene A by introducing the 5,6-alkene moiety. Asperculanes A, B, C and F, as well as 14-prolyl asperculane C, might be shunt products of the pathway. This is Thiohydrolase aneE from Aspergillus aculeatus (strain ATCC 16872 / CBS 172.66 / WB 5094).